The primary structure comprises 3198 residues: Helicase domino (3198 aa).

Residues 1 to 12 (MNEGNSAGGGHE) show a composition bias toward gly residues. Disordered regions lie at residues 1–27 (MNEGNSAGGGHEGLSPAPPAVPDRVTP), 93–112 (LPQQQQQTAEATAAAAAPAH), and 119–148 (SSTIEASVLPPQAKRQRLDDNEDRTSAASI). Positions 134–143 (QRLDDNEDRT) are enriched in basic and acidic residues. Residues 187 to 212 (KKRILQQKLQILRNLKERHLENVSEY) are a coiled coil. Disordered stretches follow at residues 256 to 350 (TSAA…SATS) and 391 to 474 (GGTP…TPNS). 2 stretches are compositionally biased toward polar residues: residues 264–281 (QNQKYTTQQTDSVESSLV) and 297–329 (NISNSTVKTNTQSQVPSKIGSFTESTPAATESN). Residues 330 to 350 (SSTTVPGTATSGAATSTSATS) show a composition bias toward low complexity. Residues 391–404 (GGTPLLPCNTSAGS) are compositionally biased toward polar residues. Residues 452 to 464 (PGTPTSGSLLSPA) show a composition bias toward low complexity. The HSA domain occupies 507–579 (LPKLQEPSRP…QELQLKRVAS (73 aa)). The interval 635-848 (NKSVADTPSL…DMEEQDEQED (214 aa)) is disordered. The segment covering 638–650 (VADTPSLNSSRLT) has biased composition (polar residues). Over residues 652–664 (PKRESDDDFRPES) the composition is skewed to basic and acidic residues. Phosphoserine occurs at positions 656, 664, and 666. Positions 666 to 696 (SEDDEETIAKAEEDAADVKEEVTALAKESEM) form a coiled coil. Basic and acidic residues-rich tracts occupy residues 672–695 (TIAKAEEDAADVKEEVTALAKESE) and 711–721 (ENRDKLMKEEQ). Thr-729 is modified (phosphothreonine). Phosphoserine occurs at positions 733, 736, and 744. The stretch at 741–784 (KEASDDDENTISKQEEAEQEIDHKKEIDELEADNDLSVEQLLAK) forms a coiled coil. The segment covering 753 to 767 (KQEEAEQEIDHKKEI) has biased composition (basic and acidic residues). Positions 805-831 (LDSDDDSTAVDSTEESEDAATEDEEDL) are enriched in acidic residues. Thr-838 is modified (phosphothreonine). The region spanning 926–1091 (VTMNERKLNG…WSLMHFLMPY (166 aa)) is the Helicase ATP-binding domain. Residue 939–946 (DEMGLGKT) coordinates ATP. Positions 1471 to 1492 (VQKQSIANGKTEPEEETEAEDP) are disordered. The region spanning 1662-1812 (TMDRLLRQLK…DMAIEGGNFT (151 aa)) is the Helicase C-terminal domain. The disordered stretch occupies residues 1828 to 1856 (EQSEQDESSQEKSENKDRIVATTTLSDTP). Residues 1836 to 1846 (SQEKSENKDRI) are compositionally biased toward basic and acidic residues. Residues 1951-1996 (AAWTAEQLRAAEAELEAQKREWEANRLAAMHKEEELLKQETEAEEM) are a coiled coil. Residues 2061–2100 (KEHKRSRTDAGYDGSRRPNKMRREDNYVPPRSLFDRPTPQ) are disordered. Basic and acidic residues predominate over residues 2067–2086 (RTDAGYDGSRRPNKMRREDN). In terms of domain architecture, Myb-like spans 2136–2205 (TEPEAMAEWC…QCRWRYETHI (70 aa)). The segment at 2318–2362 (IREKQRGQQMSQPPVGVGVVQQMQQQSQQQQQPAPPPLPQQQQPQ) is disordered. Low complexity predominate over residues 2325–2349 (QQMSQPPVGVGVVQQMQQQSQQQQQ).

This sequence belongs to the SNF2/RAD54 helicase family. SWR1 subfamily. As to quaternary structure, component of the Tip60 chromatin-remodeling complex which contains Domino, Tip60, Tra1, Brd8, E(Pc), DMAP1, Pontin, Reptin, Ing3, Act87E, BAP55, Mrg15, MrgBP, Gas41 and YL-1. As to expression, isoform B is present at high levels in ovary, in follicle cells, nurse cells and oocyte. Isoform B is also present in germline and somatic stem cells from the germarium. Isoform A is undetectable in adult ovary (at protein level).

The protein resides in the nucleus. In terms of biological role, mediates the ATP-dependent exchange of unmodified histone H2AV for its phosphorylated and acetylated form H2AVK5acS138ph, leading to transcriptional regulation of selected genes by chromatin remodeling. Involved in Notch signaling. Represses E2F target genes. Required for somatic stem cell self-renewal but not for germline stem cell self-renewal. Involved in oogenesis. In Drosophila melanogaster (Fruit fly), this protein is Helicase domino (dom).